Consider the following 139-residue polypeptide: Large ribosomal subunit protein uL16 (139 aa).

The protein belongs to the universal ribosomal protein uL16 family. In terms of assembly, part of the 50S ribosomal subunit.

In terms of biological role, binds 23S rRNA and is also seen to make contacts with the A and possibly P site tRNAs. The chain is Large ribosomal subunit protein uL16 from Microcystis aeruginosa (strain NIES-843 / IAM M-2473).